Reading from the N-terminus, the 327-residue chain is Complex I intermediate-associated protein 30, mitochondrial (327 aa).

A mitochondrion-targeting transit peptide spans 1 to 24 (MALVHKLLRGTYILRKFSKPASAL). Residues 42 to 63 (PVASPGKASSQRKTEGDLQGDH) are disordered. A compositionally biased stretch (basic and acidic residues) spans 53-63 (RKTEGDLQGDH). A Phosphoserine modification is found at S318.

The protein belongs to the CIA30 family. Part of the mitochondrial complex I assembly/MCIA complex that comprises at least the core subunits TMEM126B, NDUFAF1, ECSIT and ACAD9 and complement subunits such as COA1 and TMEM186. Interacts with ECSIT. Interacts with ACAD9. At early stages of complex I assembly, it is found in intermediate subcomplexes that contain different subunits including NDUFB6, NDUFA6, NDUFA9, NDUFS3, NDUFS7, ND1, ND2 and ND3. Interacts with TMEM70 and TMEM242.

The protein resides in the mitochondrion. It localises to the mitochondrion matrix. As part of the MCIA complex, involved in the assembly of the mitochondrial complex I. The chain is Complex I intermediate-associated protein 30, mitochondrial from Pongo pygmaeus (Bornean orangutan).